The following is a 249-amino-acid chain: ATP synthase subunit a, chloroplastic (249 aa).

The next 5 membrane-spanning stretches (helical) occupy residues 40 to 60 (QVLI…VLVV), 97 to 117 (VPFI…GALL), 136 to 156 (INTT…AGLS), 201 to 221 (LVVV…VMFL), and 222 to 242 (GLFT…AYIG).

Belongs to the ATPase A chain family. In terms of assembly, F-type ATPases have 2 components, CF(1) - the catalytic core - and CF(0) - the membrane proton channel. CF(1) has five subunits: alpha(3), beta(3), gamma(1), delta(1), epsilon(1). CF(0) has four main subunits: a, b, b' and c.

The protein localises to the plastid. It is found in the chloroplast thylakoid membrane. Key component of the proton channel; it plays a direct role in the translocation of protons across the membrane. This is ATP synthase subunit a, chloroplastic from Aethionema grandiflorum (Persian stone-cress).